The sequence spans 426 residues: Diaminobutyrate--2-oxoglutarate transaminase (426 aa).

Position 272 is an N6-(pyridoxal phosphate)lysine (lysine 272).

Belongs to the class-III pyridoxal-phosphate-dependent aminotransferase family. The cofactor is pyridoxal 5'-phosphate.

It carries out the reaction L-2,4-diaminobutanoate + 2-oxoglutarate = L-aspartate 4-semialdehyde + L-glutamate. The protein operates within amine and polyamine biosynthesis; ectoine biosynthesis; L-ectoine from L-aspartate 4-semialdehyde: step 1/3. In terms of biological role, catalyzes reversively the conversion of L-aspartate beta-semialdehyde (ASA) to L-2,4-diaminobutyrate (DABA) by transamination with L-glutamate. The polypeptide is Diaminobutyrate--2-oxoglutarate transaminase (ectB) (Sporosarcina pasteurii (Bacillus pasteurii)).